The chain runs to 243 residues: Chalcone--flavanone isomerase (243 aa).

Residues Thr-50, Asn-115, and Ser-192 each contribute to the substrate site.

It belongs to the chalcone isomerase family.

It carries out the reaction a chalcone = a flavanone.. The protein operates within secondary metabolite biosynthesis; flavonoid biosynthesis. Functionally, catalyzes the intramolecular cyclization of bicyclic chalcones into tricyclic (S)-flavanones. Responsible for the isomerization of 4,2',4',6'-tetrahydroxychalcone (also termed chalcone) into naringenin. The sequence is that of Chalcone--flavanone isomerase (CHI) from Ipomoea batatas (Sweet potato).